The following is a 158-amino-acid chain: Cyclic pyranopterin monophosphate synthase (158 aa).

Residues leucine 75–histidine 77 and methionine 113–glutamate 114 each bind substrate. Aspartate 128 is an active-site residue.

Belongs to the MoaC family. As to quaternary structure, homohexamer; trimer of dimers.

It carries out the reaction (8S)-3',8-cyclo-7,8-dihydroguanosine 5'-triphosphate = cyclic pyranopterin phosphate + diphosphate. Its pathway is cofactor biosynthesis; molybdopterin biosynthesis. In terms of biological role, catalyzes the conversion of (8S)-3',8-cyclo-7,8-dihydroguanosine 5'-triphosphate to cyclic pyranopterin monophosphate (cPMP). This is Cyclic pyranopterin monophosphate synthase from Pasteurella multocida (strain Pm70).